We begin with the raw amino-acid sequence, 223 residues long: Deoxyribose-phosphate aldolase (223 aa).

The active-site Proton donor/acceptor is the aspartate 91. The Schiff-base intermediate with acetaldehyde role is filled by lysine 153. Lysine 182 (proton donor/acceptor) is an active-site residue.

This sequence belongs to the DeoC/FbaB aldolase family. DeoC type 1 subfamily.

Its subcellular location is the cytoplasm. The enzyme catalyses 2-deoxy-D-ribose 5-phosphate = D-glyceraldehyde 3-phosphate + acetaldehyde. Its pathway is carbohydrate degradation; 2-deoxy-D-ribose 1-phosphate degradation; D-glyceraldehyde 3-phosphate and acetaldehyde from 2-deoxy-alpha-D-ribose 1-phosphate: step 2/2. Functionally, catalyzes a reversible aldol reaction between acetaldehyde and D-glyceraldehyde 3-phosphate to generate 2-deoxy-D-ribose 5-phosphate. The chain is Deoxyribose-phosphate aldolase from Streptococcus pyogenes serotype M2 (strain MGAS10270).